The primary structure comprises 908 residues: Protein translocase subunit SecA (908 aa).

ATP contacts are provided by residues Gln-90, Gly-108–Thr-112, and Asp-503. The span at Ala-846–Pro-864 shows a compositional bias: low complexity. The segment at Ala-846–Gly-884 is disordered. Zn(2+)-binding residues include Cys-892, Cys-894, Cys-903, and His-904.

It belongs to the SecA family. As to quaternary structure, monomer and homodimer. Part of the essential Sec protein translocation apparatus which comprises SecA, SecYEG and auxiliary proteins SecDF-YajC and YidC. Requires Zn(2+) as cofactor.

It is found in the cell inner membrane. It localises to the cytoplasm. The catalysed reaction is ATP + H2O + cellular proteinSide 1 = ADP + phosphate + cellular proteinSide 2.. Functionally, part of the Sec protein translocase complex. Interacts with the SecYEG preprotein conducting channel. Has a central role in coupling the hydrolysis of ATP to the transfer of proteins into and across the cell membrane, serving both as a receptor for the preprotein-SecB complex and as an ATP-driven molecular motor driving the stepwise translocation of polypeptide chains across the membrane. The protein is Protein translocase subunit SecA of Cereibacter sphaeroides (strain KD131 / KCTC 12085) (Rhodobacter sphaeroides).